A 351-amino-acid polypeptide reads, in one-letter code: Small ribosomal subunit biogenesis GTPase RsgA (351 aa).

Basic residues predominate over residues 1–12; it reads MAKHKLSKGQQR. The interval 1-37 is disordered; sequence MAKHKLSKGQQRRVRENHQRRLKKQDNKPEMDDNQLG. A compositionally biased stretch (basic and acidic residues) spans 13–31; sequence RVRENHQRRLKKQDNKPEM. A CP-type G domain is found at 112 to 274; sequence YYDGIKPIAA…VIDSPGVREF (163 aa). GTP contacts are provided by residues 160–163 and 214–222; these read NKID and GQSGVGKSS. Zn(2+) contacts are provided by C298, C303, H305, and C311.

Belongs to the TRAFAC class YlqF/YawG GTPase family. RsgA subfamily. In terms of assembly, monomer. Associates with 30S ribosomal subunit, binds 16S rRNA. Requires Zn(2+) as cofactor.

Its subcellular location is the cytoplasm. In terms of biological role, one of several proteins that assist in the late maturation steps of the functional core of the 30S ribosomal subunit. Helps release RbfA from mature subunits. May play a role in the assembly of ribosomal proteins into the subunit. Circularly permuted GTPase that catalyzes slow GTP hydrolysis, GTPase activity is stimulated by the 30S ribosomal subunit. This chain is Small ribosomal subunit biogenesis GTPase RsgA, found in Photorhabdus laumondii subsp. laumondii (strain DSM 15139 / CIP 105565 / TT01) (Photorhabdus luminescens subsp. laumondii).